The following is a 191-amino-acid chain: Protein Ves (191 aa).

The protein belongs to the Ves family.

The sequence is that of Protein Ves from Escherichia fergusonii (strain ATCC 35469 / DSM 13698 / CCUG 18766 / IAM 14443 / JCM 21226 / LMG 7866 / NBRC 102419 / NCTC 12128 / CDC 0568-73).